The chain runs to 506 residues: Cysteine--tRNA ligase (506 aa).

Cys34 contacts Zn(2+). Residues 36–46 (PTVYDFAHIGN) carry the 'HIGH' region motif. Zn(2+) contacts are provided by Cys230, His269, and Glu273. A 'KMSKS' region motif is present at residues 302–306 (KMSKS). ATP is bound at residue Lys305.

The protein belongs to the class-I aminoacyl-tRNA synthetase family. In terms of assembly, monomer. It depends on Zn(2+) as a cofactor.

The protein resides in the cytoplasm. It catalyses the reaction tRNA(Cys) + L-cysteine + ATP = L-cysteinyl-tRNA(Cys) + AMP + diphosphate. The sequence is that of Cysteine--tRNA ligase from Brucella melitensis biotype 2 (strain ATCC 23457).